Here is a 109-residue protein sequence, read N- to C-terminus: Parvalbumin alpha (109 aa).

2 consecutive EF-hand domains span residues 38-73 (KTDA…FSAH) and 77-109 (LNDT…VAQA). Ca(2+) contacts are provided by Asp51, Asp53, Ser55, Glu62, Asp90, Asp92, Asp94, Lys96, and Glu101.

The protein belongs to the parvalbumin family.

Functionally, in muscle, parvalbumin is thought to be involved in relaxation after contraction. It binds two calcium ions. This chain is Parvalbumin alpha, found in Triakis semifasciata (Leopard shark).